We begin with the raw amino-acid sequence, 484 residues long: Dolichyl-P-Man:Man5GlcNAc2-PP-dolichol alpha-1,3-mannosyltransferase l(2)not2 (484 aa).

Residues 1–43 (MAPPKAASHRPAVRRKKSGTLVDSILDKYLNVRFFKYLLLEPA) lie on the Cytoplasmic side of the membrane. A helical transmembrane segment spans residues 44–64 (ALPIVGLFVLLAELVINVVVI). Residues 65–97 (QRVPYTEIDWVAYMQECEGFLNGTTNYSLLRGD) are Lumenal-facing. A helical transmembrane segment spans residues 98 to 118 (TGPLVYPAAFVYIYSALYYVT). The Cytoplasmic segment spans residues 119–125 (SHGTNVR). A helical membrane pass occupies residues 126–146 (LAQYIFAGIYLLQLALVLRLY). The Lumenal segment spans residues 147–171 (SKSRKVPPYVLVLSAFTSYRIHSIY). The helical transmembrane segment at 172 to 192 (VLRLFNDPVAVLLLYAALNLF) threads the bilayer. Residues 193 to 211 (LDRRWTLGSTFFSLAVGVK) are Cytoplasmic-facing. A helical membrane pass occupies residues 212–232 (MNILLFAPALLLFYLANLGLL). Position 233 (Arg-233) is a topological domain, lumenal. Residues 234 to 254 (TILQLAVCGVIQLLLGAPFLL) form a helical membrane-spanning segment. The Cytoplasmic segment spans residues 255 to 294 (THPVEYLRGSFDLGRIFEHKWTVNYRFLSRDVFENRTFHV). The helical transmembrane segment at 295 to 315 (SLLGLHLLLLLAFAKPTWTFF) threads the bilayer. At 316 to 403 (QSYVRLRRIE…YGIHFDRCTQ (88 aa)) the chain is on the lumenal side. Residues 404–424 (LALLPFFLCNLVGVACSRSLH) form a helical membrane-spanning segment. Residues 425-426 (YQ) lie on the Cytoplasmic side of the membrane. The helical transmembrane segment at 427–447 (FYVWYFHSLPYLAWSTPYSLG) threads the bilayer. Residues 448–484 (VRCLILGLIEYCWNTYPSTNFSSAALHFTHIIPPYQL) lie on the Lumenal side of the membrane.

It belongs to the glycosyltransferase ALG3 family.

Its subcellular location is the endoplasmic reticulum membrane. The catalysed reaction is an alpha-D-Man-(1-&gt;2)-alpha-D-Man-(1-&gt;2)-alpha-D-Man-(1-&gt;3)-[alpha-D-Man-(1-&gt;6)]-beta-D-Man-(1-&gt;4)-beta-D-GlcNAc-(1-&gt;4)-alpha-D-GlcNAc-diphospho-di-trans,poly-cis-dolichol + a di-trans,poly-cis-dolichyl beta-D-mannosyl phosphate = an alpha-D-Man-(1-&gt;2)-alpha-D-Man-(1-&gt;2)-alpha-D-Man-(1-&gt;3)-[alpha-D-Man-(1-&gt;3)-alpha-D-Man-(1-&gt;6)]-beta-D-Man-(1-&gt;4)-beta-D-GlcNAc-(1-&gt;4)-alpha-D-GlcNAc-diphospho-di-trans,poly-cis-dolichol + a di-trans,poly-cis-dolichyl phosphate + H(+). It participates in protein modification; protein glycosylation. Functionally, probable alpha-1,3-mannosyltransferase involved in the N-glycosylation pathway. Involved in glycosylation of the TNF receptor grnd, regulating its ligand affinity. Required for normal epithelial growth and architecture. Suppressor of JNK-dependent intestinal stem cell proliferation. In Drosophila melanogaster (Fruit fly), this protein is Dolichyl-P-Man:Man5GlcNAc2-PP-dolichol alpha-1,3-mannosyltransferase l(2)not2.